The following is a 198-amino-acid chain: Glycerol-3-phosphate acyltransferase (198 aa).

Helical transmembrane passes span 5–25 (LILL…LWIG), 56–76 (SIVT…PFFF), 84–104 (FWLL…FAGF), 114–134 (AGVI…VFLV), and 158–178 (LFMG…FVIW).

Belongs to the PlsY family. In terms of assembly, probably interacts with PlsX.

It localises to the cell membrane. It carries out the reaction an acyl phosphate + sn-glycerol 3-phosphate = a 1-acyl-sn-glycero-3-phosphate + phosphate. Its pathway is lipid metabolism; phospholipid metabolism. Functionally, catalyzes the transfer of an acyl group from acyl-phosphate (acyl-PO(4)) to glycerol-3-phosphate (G3P) to form lysophosphatidic acid (LPA). This enzyme utilizes acyl-phosphate as fatty acyl donor, but not acyl-CoA or acyl-ACP. The chain is Glycerol-3-phosphate acyltransferase from Listeria monocytogenes serotype 4b (strain CLIP80459).